Reading from the N-terminus, the 902-residue chain is Glutamate receptor 4 (902 aa).

The first 20 residues, 1–20 (MRIISRQIVLLFSGFWGLAM), serve as a signal peptide directing secretion. At 22-544 (AFPSSVQIGG…GVFSFLDPLA (523 aa)) the chain is on the extracellular side. Residues asparagine 52, asparagine 56, asparagine 258, asparagine 371, asparagine 407, and asparagine 414 are each glycosylated (N-linked (GlcNAc...) asparagine). The cysteines at positions 84 and 331 are disulfide-linked. L-glutamate is bound by residues proline 500, threonine 502, and arginine 507. Residues 545-565 (YEIWMCIVFAYIGVSVVLFLV) form a helical membrane-spanning segment. Over 566–592 (SRFSPYEWHTEEPEDGKEGPSDQPPNE) the chain is Cytoplasmic. The segment at residues 593 to 608 (FGIFNSLWFSLGAFMQ) is an intramembrane region (helical; Pore-forming). The stretch at 609–611 (QGC) is an intramembrane region. Cysteine 611 is lipidated: S-palmitoyl cysteine. Residues 612–617 (DISPRS) lie on the Cytoplasmic side of the membrane. The helical transmembrane segment at 618 to 638 (LSGRIVGGVWWFFTLIIISSY) threads the bilayer. The Extracellular segment spans residues 639–813 (TANLAAFLTV…DKTSALSLSN (175 aa)). 3 residues coordinate L-glutamate: serine 676, threonine 677, and glutamate 727. Residues cysteine 740 and cysteine 795 are joined by a disulfide bond. Residues 814–834 (VAGVFYILVGGLGLAMLVALI) traverse the membrane as a helical segment. Topologically, residues 835–902 (EFCYKSRAEA…GLAVIASDLP (68 aa)) are cytoplasmic. A lipid anchor (S-palmitoyl cysteine) is attached at cysteine 837. Serine 862 bears the Phosphoserine; by PKC/PRKCG mark.

It belongs to the glutamate-gated ion channel (TC 1.A.10.1) family. GRIA4 subfamily. Homotetramer or heterotetramer of pore-forming glutamate receptor subunits. Tetramers may be formed by the dimerization of dimers. Interacts with EPB41L1 via its C-terminus. Isoform 3 interacts with PICK1. Found in a complex with GRIA1, GRIA2, GRIA3, CNIH2, CNIH3, CACNG2, CACNG3, CACNG4, CACNG5, CACNG7 and CACNG8. Interacts with CACNG5 and PRKCG. Found in a complex with GRIA1, GRIA2, GRIA3, DLG4, CACNG8 and CNIH2. Palmitoylated. Depalmitoylated upon L-glutamate stimulation. ZDHHC3/GODZ specifically palmitoylates Cys-611, which leads to Golgi retention and decreased cell surface expression. In contrast, Cys-837 palmitoylation does not affect cell surface expression but regulates stimulation-dependent endocytosis. In terms of processing, phosphorylated at Ser-862 by PRKCG; phosphorylation increases plasma membrane-associated GRI4 expression.

The protein localises to the cell membrane. Its subcellular location is the postsynaptic cell membrane. The protein resides in the cell projection. It localises to the dendrite. It carries out the reaction Ca(2+)(in) = Ca(2+)(out). The catalysed reaction is Na(+)(in) = Na(+)(out). It catalyses the reaction Mg(2+)(in) = Mg(2+)(out). Ionotropic glutamate receptor that functions as a ligand-gated cation channel, gated by L-glutamate and glutamatergic agonists such as alpha-amino-3-hydroxy-5-methyl-4-isoxazolepropionic acid (AMPA), quisqualic acid, and kainic acid. L-glutamate acts as an excitatory neurotransmitter at many synapses in the central nervous system and plays an important role in fast excitatory synaptic transmission. Binding of the excitatory neurotransmitter L-glutamate induces a conformation change, leading to the opening of the cation channel, and thereby converts the chemical signal to an electrical impulse upon entry of monovalent and divalent cations such as sodium and calcium. The receptor then desensitizes rapidly and enters a transient inactive state, characterized by the presence of bound agonist. In the presence of CACNG8, shows resensitization which is characterized by a delayed accumulation of current flux upon continued application of L-glutamate. This is Glutamate receptor 4 from Macaca fascicularis (Crab-eating macaque).